We begin with the raw amino-acid sequence, 339 residues long: Fructose-1,6-bisphosphatase class 1 (339 aa).

Mg(2+) contacts are provided by Glu-101, Asp-120, Leu-122, and Asp-123. Substrate is bound by residues 123-126 (DGSS), Asn-215, and Lys-281. A Mg(2+)-binding site is contributed by Glu-287.

This sequence belongs to the FBPase class 1 family. In terms of assembly, homotetramer. Requires Mg(2+) as cofactor.

It is found in the cytoplasm. The catalysed reaction is beta-D-fructose 1,6-bisphosphate + H2O = beta-D-fructose 6-phosphate + phosphate. It participates in carbohydrate biosynthesis; gluconeogenesis. The sequence is that of Fructose-1,6-bisphosphatase class 1 from Polynucleobacter necessarius subsp. necessarius (strain STIR1).